The following is a 545-amino-acid chain: Chaperonin GroEL (545 aa).

Residues 30 to 33, K51, 87 to 91, G415, 483 to 485, and D499 each bind ATP; these read TLGP, DGTTT, and NAA.

It belongs to the chaperonin (HSP60) family. In terms of assembly, forms a cylinder of 14 subunits composed of two heptameric rings stacked back-to-back. Interacts with the co-chaperonin GroES.

It is found in the cytoplasm. It carries out the reaction ATP + H2O + a folded polypeptide = ADP + phosphate + an unfolded polypeptide.. Functionally, together with its co-chaperonin GroES, plays an essential role in assisting protein folding. The GroEL-GroES system forms a nano-cage that allows encapsulation of the non-native substrate proteins and provides a physical environment optimized to promote and accelerate protein folding. The sequence is that of Chaperonin GroEL from Aquifex aeolicus (strain VF5).